The primary structure comprises 123 residues: Small ribosomal subunit protein uS13 (123 aa).

The disordered stretch occupies residues 95 to 123; the sequence is GLPVRGQKTKTNARTRKGPKRAISGKKNK.

The protein belongs to the universal ribosomal protein uS13 family. As to quaternary structure, part of the 30S ribosomal subunit. Forms a loose heterodimer with protein S19. Forms two bridges to the 50S subunit in the 70S ribosome.

Functionally, located at the top of the head of the 30S subunit, it contacts several helices of the 16S rRNA. In the 70S ribosome it contacts the 23S rRNA (bridge B1a) and protein L5 of the 50S subunit (bridge B1b), connecting the 2 subunits; these bridges are implicated in subunit movement. Contacts the tRNAs in the A and P-sites. The polypeptide is Small ribosomal subunit protein uS13 (Clostridium novyi (strain NT)).